A 167-amino-acid chain; its full sequence is Zymogen granule membrane protein 16 (167 aa).

The N-terminal stretch at 1–16 (MLAVALLVLLCASASA) is a signal peptide. The Jacalin-type lectin domain maps to 24 to 159 (SSYSGEYGGK…IDSISLHWDT (136 aa)).

Belongs to the jacalin lectin family.

The protein resides in the secreted. It localises to the extracellular space. The protein localises to the extracellular matrix. It is found in the zymogen granule lumen. Its subcellular location is the golgi apparatus lumen. Functionally, may play a role in protein trafficking. May act as a linker molecule between the submembranous matrix on the luminal side of zymogen granule membrane (ZGM) and aggregated secretory proteins during granule formation in the TGN. This Mus musculus (Mouse) protein is Zymogen granule membrane protein 16 (Zg16).